We begin with the raw amino-acid sequence, 148 residues long: Ribose-5-P isomerase B (148 aa).

Residue 8-9 coordinates D-ribulose 5-phosphate; the sequence is DE. The active-site Proton acceptor is the Cys-65. Residues 66–70, Asn-99, Arg-132, and Lys-136 each bind D-ribulose 5-phosphate; that span reads GTGIG.

Belongs to the LacAB/RpiB family.

The enzyme catalyses aldehydo-D-ribose 5-phosphate = D-ribulose 5-phosphate. It participates in carbohydrate degradation; pentose phosphate pathway; D-ribose 5-phosphate from D-ribulose 5-phosphate (non-oxidative stage): step 1/1. Catalyzes the interconversion of ribulose-5-P and ribose-5-P. In Listeria innocua serovar 6a (strain ATCC BAA-680 / CLIP 11262), this protein is Ribose-5-P isomerase B.